Here is a 122-residue protein sequence, read N- to C-terminus: MARIAGIDLPRNKRIEIALTYIYGIGRSTAQKILADAGVDSNTRSDNLTESEIARIRENIDKNVKVEGDLRRDISMNIKRLMDLGCYRGLRHRKGLPVHGQRTKTNARTRKGPARTVAGKKK.

Residues 95–122 (GLPVHGQRTKTNARTRKGPARTVAGKKK) form a disordered region.

It belongs to the universal ribosomal protein uS13 family. As to quaternary structure, part of the 30S ribosomal subunit. Forms a loose heterodimer with protein S19. Forms two bridges to the 50S subunit in the 70S ribosome.

In terms of biological role, located at the top of the head of the 30S subunit, it contacts several helices of the 16S rRNA. In the 70S ribosome it contacts the 23S rRNA (bridge B1a) and protein L5 of the 50S subunit (bridge B1b), connecting the 2 subunits; these bridges are implicated in subunit movement. Contacts the tRNAs in the A and P-sites. This chain is Small ribosomal subunit protein uS13, found in Geotalea uraniireducens (strain Rf4) (Geobacter uraniireducens).